The chain runs to 299 residues: 4-hydroxy-tetrahydrodipicolinate synthase (299 aa).

T50 contributes to the pyruvate binding site. Residue Y139 is the Proton donor/acceptor of the active site. K167 acts as the Schiff-base intermediate with substrate in catalysis. V209 is a binding site for pyruvate.

It belongs to the DapA family. In terms of assembly, homotetramer; dimer of dimers.

It is found in the cytoplasm. It carries out the reaction L-aspartate 4-semialdehyde + pyruvate = (2S,4S)-4-hydroxy-2,3,4,5-tetrahydrodipicolinate + H2O + H(+). The protein operates within amino-acid biosynthesis; L-lysine biosynthesis via DAP pathway; (S)-tetrahydrodipicolinate from L-aspartate: step 3/4. Catalyzes the condensation of (S)-aspartate-beta-semialdehyde [(S)-ASA] and pyruvate to 4-hydroxy-tetrahydrodipicolinate (HTPA). This chain is 4-hydroxy-tetrahydrodipicolinate synthase, found in Synechococcus elongatus (strain ATCC 33912 / PCC 7942 / FACHB-805) (Anacystis nidulans R2).